The primary structure comprises 646 residues: WW domain-containing adapter protein with coiled-coil (646 aa).

Residues 1 to 138 form a disordered region; it reads MVMYARKQQR…YDSADDWSEH (138 aa). Polar residues predominate over residues 23–37; that stretch reads QPFQALKYSSKSHPS. Positions 38–50 are enriched in basic and acidic residues; it reads SGDHRHEKMRDAA. Serine 53 carries the phosphoserine modification. Over residues 61-75 the composition is skewed to polar residues; it reads RSNSPENKYSDSTGH. Over residues 103-122 the composition is skewed to low complexity; it reads NHSALHSSNSHSSNPSNNPS. The region spanning 129–162 is the WW domain; the sequence is YDSADDWSEHISSSGKKYYYNCRTEVSQWEKPKE. Residues serine 131 and serine 142 each carry the phosphoserine modification. Composition is skewed to basic and acidic residues over residues 158–174 and 182–191; these read EKPK…KEAN and PKDRDYRREV. Disordered regions lie at residues 158–352 and 428–541; these read EKPK…PQST and TQAQ…TATV. A compositionally biased stretch (polar residues) spans 211–225; that stretch reads DASSLLPQNILSQTS. Phosphoserine is present on serine 225. Residues 226–239 show a composition bias toward basic and acidic residues; the sequence is RHNDKDYRLPRAET. Residues 252–267 are compositionally biased toward low complexity; that stretch reads PVVHPTATPSTVPSSP. Positions 284 to 300 are enriched in polar residues; that stretch reads GASTLSKLPTPTASLPA. Position 293 is a phosphothreonine (threonine 293). The residue at position 302 (lysine 302) is an N6-acetyllysine. Residues 316 to 331 show a composition bias toward polar residues; that stretch reads SHSCTTPSTSSASGLN. Positions 332-351 are enriched in low complexity; it reads PTSAPPTSASAVPVSPVPQS. A compositionally biased stretch (polar residues) spans 428–463; the sequence is TQAQPSNQSPMSLTSDASSPRSYVSPRISTPQTNTV. Position 446 is a phosphoserine (serine 446). Phosphothreonine is present on threonine 471. Positions 490–503 are enriched in polar residues; it reads VSHSATQQPVTADK. 3 positions are modified to phosphoserine: serine 511, serine 523, and serine 525. A compositionally biased stretch (low complexity) spans 511-524; the sequence is SPRSLQRLSSQRSP. A compositionally biased stretch (polar residues) spans 528–541; it reads PNHTCSSNASTATV. Residues 617–643 adopt a coiled-coil conformation; sequence QATLREQRILFLRQQIKELEKLKNQNS.

As to quaternary structure, interacts (via coiled coil domain) with RNF20, RNF40 and UBE2A. Interacts (via WW domain) with RNA polymerase II. Interacts with MTOR and other components of the MTOR pathway including RPTOR, RUVBL1, RUVBL2, TTI1 and TTI2. Phosphorylated on tyrosine residues.

The protein localises to the nucleus speckle. It is found in the nucleus. In terms of biological role, acts as a linker between gene transcription and histone H2B monoubiquitination at 'Lys-120' (H2BK120ub1). Interacts with the RNA polymerase II transcriptional machinery via its WW domain and with RNF20-RNF40 via its coiled coil region, thereby linking and regulating H2BK120ub1 and gene transcription. Regulates the cell-cycle checkpoint activation in response to DNA damage. Positive regulator of amino acid starvation-induced autophagy. Also acts as a negative regulator of basal autophagy. Positively regulates MTOR activity by promoting, in an energy-dependent manner, the assembly of the TTT complex composed of TELO2, TTI1 and TTI2 and the RUVBL complex composed of RUVBL1 and RUVBL2 into the TTT-RUVBL complex. This leads to the dimerization of the mTORC1 complex and its subsequent activation. May negatively regulate the ubiquitin proteasome pathway. The sequence is that of WW domain-containing adapter protein with coiled-coil (Wac) from Mus musculus (Mouse).